Reading from the N-terminus, the 329-residue chain is Quinone oxidoreductase (329 aa).

A2 carries the N-acetylalanine modification. K23 carries the post-translational modification N6-acetyllysine. Residues Y53, 158–161 (SGGV), G181, H200, N229, 246–249 (VGSR), and 269–271 (VAL) each bind NADP(+). S248 carries the post-translational modification Phosphoserine.

The protein belongs to the zinc-containing alcohol dehydrogenase family. Quinone oxidoreductase subfamily. In terms of assembly, homotetramer.

The protein resides in the cytoplasm. It catalyses the reaction 2 a quinone + NADPH + H(+) = 2 a 1,4-benzosemiquinone + NADP(+). Functionally, does not have alcohol dehydrogenase activity. Binds NADP and acts through a one-electron transfer process. Orthoquinones, such as 1,2-naphthoquinone or 9,10-phenanthrenequinone, are the best substrates (in vitro). May act in the detoxification of xenobiotics. Interacts with (AU)-rich elements (ARE) in the 3'-UTR of target mRNA species and enhances their stability. NADPH binding interferes with mRNA binding. This Sus scrofa (Pig) protein is Quinone oxidoreductase (CRYZ).